The primary structure comprises 817 residues: General transcription factor 3C polypeptide 4 (817 aa).

M1 bears the N-acetylmethionine mark. Residues 1–40 form a disordered region; that stretch reads MSEADQALVGPKADEPSPPAEEKDEGGGKEAAADAAPGPS. K221 participates in a covalent cross-link: Glycyl lysine isopeptide (Lys-Gly) (interchain with G-Cter in SUMO2). Phosphoserine is present on residues S600 and S607. A disordered region spans residues 603 to 658; it reads LLVDSPGMGDGEDEQQEEGTSKQGTKAGLQEKSKEGDTEETPEDSLTAGGDTGGRE. A Glycyl lysine isopeptide (Lys-Gly) (interchain with G-Cter in SUMO2) cross-link involves residue K624. At S647 the chain carries Phosphoserine.

This sequence belongs to the TFIIIC subunit 4 family. Part of the TFIIIC subcomplex TFIIIC2, consisting of six subunits, GTF3C1, GTF3C2, GTF3C3, GTF3C4, GTF3C5 and GTF3C6. Interacts with BRF1, GTF3C1, GTF3C2, GTF3C5, GTF3C6, POLR3C and POLR3F.

Its subcellular location is the nucleus. The enzyme catalyses L-lysyl-[protein] + acetyl-CoA = N(6)-acetyl-L-lysyl-[protein] + CoA + H(+). Functionally, essential for RNA polymerase III to make a number of small nuclear and cytoplasmic RNAs, including 5S RNA, tRNA, and adenovirus-associated (VA) RNA of both cellular and viral origin. Has histone acetyltransferase activity (HAT) with unique specificity for free and nucleosomal H3. May cooperate with GTF3C5 in facilitating the recruitment of TFIIIB and RNA polymerase through direct interactions with BRF1, POLR3C and POLR3F. May be localized close to the A box. The protein is General transcription factor 3C polypeptide 4 (Gtf3c4) of Mus musculus (Mouse).